A 258-amino-acid polypeptide reads, in one-letter code: Large ribosomal subunit protein uL5c (258 aa).

Residues 1-38 constitute a chloroplast transit peptide; it reads MASTSLLQSTSSSFAGVRFHCRTSAAPRVGLSSFTVKA.

As to quaternary structure, component of the chloroplast large ribosomal subunit (LSU). Mature 70S chloroplast ribosomes of higher plants consist of a small (30S) and a large (50S) subunit. The 30S small subunit contains 1 molecule of ribosomal RNA (16S rRNA) and 24 different proteins. The 50S large subunit contains 3 rRNA molecules (23S, 5S and 4.5S rRNA) and 33 different proteins.

Its subcellular location is the plastid. It localises to the chloroplast. Functionally, component of the chloroplast ribosome (chloro-ribosome), a dedicated translation machinery responsible for the synthesis of chloroplast genome-encoded proteins, including proteins of the transcription and translation machinery and components of the photosynthetic apparatus. This Spinacia oleracea (Spinach) protein is Large ribosomal subunit protein uL5c (RPL5).